The following is a 423-amino-acid chain: Cytidylate cyclase (423 aa).

A Guanylate cyclase domain is found at 79 to 184 (CSLFVDISGS…LKIRIGIDFG (106 aa)). Position 82 (F82) interacts with a ribonucleoside 5'-triphosphate. Residues D84, I85, and D128 each contribute to the Mn(2+) site. Positions 290-409 (ENEQFYSPRD…ICHDSFGLFI (120 aa)) are AGS-C domain.

Belongs to the adenylyl cyclase class-4/guanylyl cyclase family. Pyrimidine cyclase subfamily. In terms of assembly, homodimer. Requires Mn(2+) as cofactor.

The protein resides in the cytoplasm. The catalysed reaction is CTP = 3',5'-cyclic CMP + diphosphate. Its function is as follows. Pycsar (pyrimidine cyclase system for antiphage resistance) provides immunity against bacteriophage. The pyrimidine cyclase (PycC) synthesizes cyclic nucleotides in response to infection; these serve as specific second messenger signals. The signal activates the adjacent effector, leading to bacterial cell death and abortive phage infection. A clade E Pycsar system. Functionally, the pyrimidine cyclase gene of a two-gene Pycsar system, weakly generates cyclic CMP (cCMP) from CTP, has little to no activity on ATP, GTP or UTP. Expression of this and adjacent effector SaPycTM (AC P0DV39) probably confers resistance to bacteriophage. The genes are probably only expressed in response to bacteriophage infection. The polypeptide is Cytidylate cyclase (Staphylococcus aureus).